The following is a 235-amino-acid chain: Thiamine import ATP-binding protein ThiQ (235 aa).

In terms of domain architecture, ABC transporter spans 2-230; sequence LKLIDITWLY…QASASALLGI (229 aa). 32 to 39 lines the ATP pocket; that stretch reads GPSGAGKS.

It belongs to the ABC transporter superfamily. Thiamine importer (TC 3.A.1.19.1) family. As to quaternary structure, the complex is composed of two ATP-binding proteins (ThiQ), two transmembrane proteins (ThiP) and a solute-binding protein (ThiB).

The protein resides in the cell inner membrane. It catalyses the reaction thiamine(out) + ATP + H2O = thiamine(in) + ADP + phosphate + H(+). Its function is as follows. Part of the ABC transporter complex ThiBPQ involved in thiamine import. Responsible for energy coupling to the transport system. Is also involved in thiamine pyrophosphate (TPP) transport. This is Thiamine import ATP-binding protein ThiQ from Salmonella typhimurium (strain LT2 / SGSC1412 / ATCC 700720).